A 218-amino-acid polypeptide reads, in one-letter code: MKFIFSKSIIIATAFFLFILSQLPAVFLNFLNSNGDTYGIAHKNTPPFIILTLVVVTICIFIGIKCGFYQNYRKSLEWKNILLIFSLLIITFFIQKFVVQFITSHNLYNVSHQITNQMKVENILSSLLFPGQFVAVSILAPILEESIYRACFYKLFGYYRWTFFLSCFFFSYVHSGFSWDILGYLPLSIALTYVYHRRQVLTDSILLHALFNTLLFVF.

Transmembrane regions (helical) follow at residues 8 to 28, 48 to 68, 81 to 101, 123 to 143, and 163 to 183; these read SIIIATAFFLFILSQLPAVFL, FIILTLVVVTICIFIGIKCGF, ILLIFSLLIITFFIQKFVVQF, ILSSLLFPGQFVAVSILAPIL, and FFLSCFFFSYVHSGFSWDILG.

Belongs to the UPF0177 family.

The protein localises to the cell membrane. In Lactococcus lactis subsp. lactis (strain IL1403) (Streptococcus lactis), this protein is UPF0177 protein YaiF (yaiF).